A 373-amino-acid polypeptide reads, in one-letter code: Exonuclease V (373 aa).

Cysteine 92 provides a ligand contact to [4Fe-4S] cluster. 2 residues coordinate Mg(2+): aspartate 182 and glutamate 196. 3 residues coordinate [4Fe-4S] cluster: cysteine 343, cysteine 346, and cysteine 352.

It belongs to the EXO5 family. As to quaternary structure, monomer; monomeric form has weak exonuclease activity. Homodimer; homodimeric form is unsure but has much higher exonuclease activity, suggesting that it could homodimerize upon DNA-binding. Interacts with the replication protein A (RPA) complex. [4Fe-4S] cluster is required as a cofactor. It depends on Mg(2+) as a cofactor.

Its subcellular location is the nucleus. It localises to the cytoplasm. The protein resides in the cytosol. Functionally, single-stranded DNA (ssDNA) bidirectional exonuclease involved in DNA repair. Probably involved in DNA repair following ultraviolet (UV) irradiation and interstrand cross-links (ICLs) damage. Has both 5'-3' and 3'-5' exonuclease activities with a strong preference for 5'-ends. Acts as a sliding exonuclease that loads at ssDNA ends and then slides along the ssDNA prior to cutting; however the sliding and the 3'-5' exonuclease activities are abolished upon binding to the replication protein A (RPA) complex that enforces 5'-directionality activity. This chain is Exonuclease V (EXO5), found in Homo sapiens (Human).